The primary structure comprises 1072 residues: DNA-directed RNA polymerase subunit beta (1072 aa).

This sequence belongs to the RNA polymerase beta chain family. In terms of assembly, in plastids the minimal PEP RNA polymerase catalytic core is composed of four subunits: alpha, beta, beta', and beta''. When a (nuclear-encoded) sigma factor is associated with the core the holoenzyme is formed, which can initiate transcription.

The protein resides in the plastid. It is found in the chloroplast. The catalysed reaction is RNA(n) + a ribonucleoside 5'-triphosphate = RNA(n+1) + diphosphate. DNA-dependent RNA polymerase catalyzes the transcription of DNA into RNA using the four ribonucleoside triphosphates as substrates. The chain is DNA-directed RNA polymerase subunit beta from Draba nemorosa (Woodland whitlowgrass).